The chain runs to 162 residues: Translocator protein 2 (162 aa).

The next 5 membrane-spanning stretches (helical) occupy residues 3–23 (LQGP…CMLI), 44–64 (VILL…YLVW), 79–99 (LGLY…FLAA), 103–123 (GLAL…VFIW), and 129–149 (LAAL…AITY).

This sequence belongs to the TspO/BZRP family. In terms of assembly, homotetramer. May also form homodimer. In terms of tissue distribution, expressed in liver, bone marrow and spleen. In spleen, detected in red pulp but not in white pulp.

The protein resides in the endoplasmic reticulum membrane. Its subcellular location is the cell membrane. Its function is as follows. Cholesterol-binding protein involved in the redistribution of cholesterol from lipid droplets to the endoplasmic reticulum. Required to meet cholesterol demands during erythropoietic differentiation. May play a role in transport processes at the plasma membrane of erythrocytes, including regulating VDAC-mediated ATP export, and import of the heme precursors protoporphyrin IX and 5-aminolevulinic acid. The polypeptide is Translocator protein 2 (Tspo2) (Mus musculus (Mouse)).